The following is a 67-amino-acid chain: Protein AaeX (67 aa).

A run of 2 helical transmembrane segments spans residues Ile-9–Phe-29 and Pro-47–Val-67.

It belongs to the AaeX family.

The protein resides in the cell membrane. This chain is Protein AaeX, found in Serratia marcescens.